The sequence spans 493 residues: Transmembrane protein 184 homolog DDB_G0284525 (493 aa).

Residues Met1 to His10 show a composition bias toward polar residues. Residues Met1–Asn25 are disordered. The next 7 membrane-spanning stretches (helical) occupy residues Val46–Leu66, Ile87–Leu107, Asp119–Gly139, Tyr180–Tyr200, Phe212–Phe232, Ile254–Trp274, and Phe293–Glu313. Asn415 and Asn416 each carry an N-linked (GlcNAc...) asparagine glycan.

This sequence belongs to the TMEM184 family.

It localises to the cell membrane. Its function is as follows. Probable transporter. In Dictyostelium discoideum (Social amoeba), this protein is Transmembrane protein 184 homolog DDB_G0284525 (tmem184A).